Reading from the N-terminus, the 882-residue chain is MMAKKRIYEVAKELGIENKIVVKKAQDLGFDVKSHMSSLDDKQVSKLVDSFKSANTTKPSTEKDSKNSSRKEKTKIKVSVGAIRRRDNKNDHDNRHGNNKRRNNKFKKQQNDRRAERNKPQTEAKSAARDLLNKFKKKQRAEASELNAQTEASRRKWHQEQNPQRSKVKKVENTRKPKEEKLEGAAAVKARVQASQKPVGPKIIKPSPARNKAKRPTVKKVEPIAPVVPAPQKEETKPTRKKDFTRKKREVPDYERERSEHSDKARRRRNKKNKRINQSKEIKKQPTQRKERPLPETLVYEEGMNAQDLGKLLHREPAEIVKKLFMLGVMTNQNQSLDKDTIELLAAEYGIEAQEKVHEDISDIDTLYTKEMEESKASKHQEKRPPVVTIMGHVDHGKTTLLDRLRHTNVSEHEAGGITQKIGAYQVRIDDRLITFLDTPGHAAFSNMRARGAEITDIVVLVVAADDGVMPQTIEAIDHAKSAGVPIIVAVNKIDKPGANPDHVMEQLMKYGLVPEDWGGDTIFVKISAKTGKNVEELLQMILLQADVMELKADPDQKAIGTVIEARLDKGRGSVADVLVQQGTLKVGDPIVVGDTFGRVRVMTNDKGRRVKKATPSAPVEITGLNDVPEAADKLVVFEDEKTARSVGEQRAKNALEKQRENVQHVTLDNLFDTMKKENMKEVDIVLKADVQGSAEALQQSLEKIEVEGVRVNIIHSGVGAINESDVTLAGASNAFIVGFNVRPTNTAKSQADAEGVDIRLYNIIYKVMDDVEAAMKGMLEPTYEEKVTGNLTVRETWKVSKIGTIAGAFVDNGYVTRDSGIRVIRDGIVKYDGKVASLKRFKDDVKEVKQGFDCGITIENFNDIKVDDQLEAYEMQEVPVK.

Positions 50–299 (SFKSANTTKP…KERPLPETLV (250 aa)) are disordered. Basic and acidic residues-rich tracts occupy residues 60 to 71 (STEKDSKNSSRK) and 84 to 96 (RRRD…DNRH). Over residues 97-108 (GNNKRRNNKFKK) the composition is skewed to basic residues. Basic and acidic residues-rich tracts occupy residues 109–133 (QQND…DLLN), 169–183 (KKVE…EKLE), 232–242 (QKEETKPTRKK), and 250–263 (EVPD…EHSD). Over residues 264–277 (KARRRRNKKNKRIN) the composition is skewed to basic residues. The segment covering 278-294 (QSKEIKKQPTQRKERPL) has biased composition (basic and acidic residues). In terms of domain architecture, tr-type G spans 383 to 552 (KRPPVVTIMG…LLQADVMELK (170 aa)). Residues 392–399 (GHVDHGKT) are G1. Residue 392 to 399 (GHVDHGKT) participates in GTP binding. The tract at residues 417–421 (GITQK) is G2. The interval 438–441 (DTPG) is G3. GTP-binding positions include 438-442 (DTPGH) and 492-495 (NKID). A G4 region spans residues 492 to 495 (NKID). Residues 528–530 (SAK) are G5.

It belongs to the TRAFAC class translation factor GTPase superfamily. Classic translation factor GTPase family. IF-2 subfamily.

The protein localises to the cytoplasm. Functionally, one of the essential components for the initiation of protein synthesis. Protects formylmethionyl-tRNA from spontaneous hydrolysis and promotes its binding to the 30S ribosomal subunits. Also involved in the hydrolysis of GTP during the formation of the 70S ribosomal complex. The sequence is that of Translation initiation factor IF-2 from Lactobacillus gasseri (strain ATCC 33323 / DSM 20243 / BCRC 14619 / CIP 102991 / JCM 1131 / KCTC 3163 / NCIMB 11718 / NCTC 13722 / AM63).